Reading from the N-terminus, the 284-residue chain is Nucleotide-binding protein Shewmr4_0670 (284 aa).

8–15 (GRSGSGKS) contacts ATP. 56–59 (DVRN) contributes to the GTP binding site.

Belongs to the RapZ-like family.

Its function is as follows. Displays ATPase and GTPase activities. The protein is Nucleotide-binding protein Shewmr4_0670 of Shewanella sp. (strain MR-4).